The following is a 270-amino-acid chain: Acetylglutamate kinase (270 aa).

Substrate is bound by residues 53 to 54, R75, and N167; that span reads GG.

It belongs to the acetylglutamate kinase family. ArgB subfamily.

It localises to the cytoplasm. It carries out the reaction N-acetyl-L-glutamate + ATP = N-acetyl-L-glutamyl 5-phosphate + ADP. The protein operates within amino-acid biosynthesis; L-arginine biosynthesis; N(2)-acetyl-L-ornithine from L-glutamate: step 2/4. Its function is as follows. Catalyzes the ATP-dependent phosphorylation of N-acetyl-L-glutamate. In Shewanella halifaxensis (strain HAW-EB4), this protein is Acetylglutamate kinase.